The primary structure comprises 137 residues: Small ribosomal subunit protein uS9 (137 aa).

A disordered region spans residues 104-137; that stretch reads PLKSEGYLTRDPRAKERKKYGLHKARKAPQYSKR. Over residues 118-137 the composition is skewed to basic residues; it reads KERKKYGLHKARKAPQYSKR.

Belongs to the universal ribosomal protein uS9 family.

This chain is Small ribosomal subunit protein uS9, found in Gloeothece citriformis (strain PCC 7424) (Cyanothece sp. (strain PCC 7424)).